A 420-amino-acid chain; its full sequence is Glycogen synthase kinase-3 beta (420 aa).

The span at 1-22 (MSGRPRTTSFAESCKPVQQPSA) shows a compositional bias: polar residues. The tract at residues 1-53 (MSGRPRTTSFAESCKPVQQPSAFGSMKVSRDKDGSKVTTVVATPGQGPDRPQE) is disordered. Residue serine 9 is modified to Phosphoserine; by PKB/AKT1, RPS6KA3 and SGK3. Cysteine 14 is lipidated: S-palmitoyl cysteine. The 285-residue stretch at 56–340 (YTDTKVIGNG…PLEACAHSFF (285 aa)) folds into the Protein kinase domain. ATP contacts are provided by residues 62-70 (IGNGSFGVV) and lysine 85. Aspartate 181 functions as the Proton acceptor in the catalytic mechanism. Position 216 is a phosphotyrosine (tyrosine 216). The disordered stretch occupies residues 385-420 (QAAASPPANATAASDTNAGDRGQTNNAASASASNST). Low complexity-rich tracts occupy residues 386 to 401 (AAASPPANATAASDTN) and 409 to 420 (NNAASASASNST). The residue at position 389 (serine 389) is a Phosphoserine.

This sequence belongs to the protein kinase superfamily. CMGC Ser/Thr protein kinase family. GSK-3 subfamily. In terms of assembly, monomer. Interacts with DAB2IP (via C2 domain); the interaction stimulates GSK3B kinase activation. Interacts (via C2 domain) with PPP2CA. Interacts with ARRB2, AXIN1, CABYR, DISC1, MMP2, MUC1, NIN, PRUNE1 and ZBED3. Interacts with AXIN1; the interaction mediates hyperphosphorylation of CTNNB1 leading to its ubiquitination and destruction. Interacts with and phosphorylates SNAI1. Interacts with DNM1L (via a C-terminal domain). Found in a complex composed of MACF1, APC, AXIN1, CTNNB1 and GSK3B. Interacts with SGK3. Interacts with the CLOCK-BMAL1 heterodimer. Interacts with the BMAL1. Interacts with CTNND2. The complex composed, at least, of APC, CTNNB1 and GSK3B interacts with JPT1; the interaction requires the inactive form of GSK3B (phosphorylated at 'Ser-9'). Forms a complex composed of PRKAR2A or PRKAR2B, GSK3B and GSKIP through GSKIP interaction; facilitates PKA-induced phosphorylation and regulates GSK3B activity. Interacts with GSKIP. Interacts with GID8. Interacts with PIWIL2. Interacts with LMBR1L. Interacts with DDX3X. Interacts with BIRC2. Interacts with TNFRSF10B; TNFRSF10B stimulation inhibits GSK3B kinase activity. Found in a complex with SLC39A6, SLC39A10 and with GSK3B that controls NCAM1 phosphorylation. Interacts with PKP3 (via ARM repeats); the interaction may be involved in PKP3 protein degradation. Post-translationally, phosphorylated by AKT1 and ILK1. Upon insulin-mediated signaling, the activated PKB/AKT1 and RPS6KA3 protein kinases phosphorylate and deactivate GSK3B, resulting in the dephosphorylation and activation of GYS1. Activated by phosphorylation at Tyr-216. Inactivated by phosphorylation at Ser-9. Phosphorylated in a circadian manner in the hippocampus. Mono-ADP-ribosylation by PARP10 negatively regulates kinase activity. In terms of processing, palmitoylated. Palmitoylation by ZDHHC4 prevents AKT1-mediated phosphorylation.

The protein resides in the cytoplasm. Its subcellular location is the nucleus. It localises to the membrane. The protein localises to the cell membrane. It carries out the reaction L-seryl-[tau protein] + ATP = O-phospho-L-seryl-[tau protein] + ADP + H(+). The enzyme catalyses L-threonyl-[tau protein] + ATP = O-phospho-L-threonyl-[tau protein] + ADP + H(+). It catalyses the reaction L-seryl-[protein] + ATP = O-phospho-L-seryl-[protein] + ADP + H(+). The catalysed reaction is L-threonyl-[protein] + ATP = O-phospho-L-threonyl-[protein] + ADP + H(+). Activated by phosphorylation at Tyr-216. In response to insulin, inhibited by phosphorylation at Ser-9 by PKB/AKT1; phosphorylation at this site causes a conformational change, preventing access of substrates to the active site. Inhibited by IL22 treatment which also triggers phosphorylation at Ser-9, promoting inactivation. Inhibited by lithium. Its function is as follows. Constitutively active protein kinase that acts as a negative regulator in the hormonal control of glucose homeostasis, Wnt signaling and regulation of transcription factors and microtubules, by phosphorylating and inactivating glycogen synthase (GYS1 or GYS2), EIF2B, CTNNB1/beta-catenin, APC, AXIN1, DPYSL2/CRMP2, JUN, NFATC1/NFATC, MAPT/TAU and MACF1. Requires primed phosphorylation of the majority of its substrates. In skeletal muscle, contributes to insulin regulation of glycogen synthesis by phosphorylating and inhibiting GYS1 activity and hence glycogen synthesis. May also mediate the development of insulin resistance by regulating activation of transcription factors. Regulates protein synthesis by controlling the activity of initiation factor 2B (EIF2BE/EIF2B5) in the same manner as glycogen synthase. In Wnt signaling, GSK3B forms a multimeric complex with APC, AXIN1 and CTNNB1/beta-catenin and phosphorylates the N-terminus of CTNNB1 leading to its degradation mediated by ubiquitin/proteasomes. Phosphorylates JUN at sites proximal to its DNA-binding domain, thereby reducing its affinity for DNA. Phosphorylates NFATC1/NFATC on conserved serine residues promoting NFATC1/NFATC nuclear export, shutting off NFATC1/NFATC gene regulation, and thereby opposing the action of calcineurin. Phosphorylates MAPT/TAU on 'Thr-548', decreasing significantly MAPT/TAU ability to bind and stabilize microtubules. MAPT/TAU is the principal component of neurofibrillary tangles in Alzheimer disease. Plays an important role in ERBB2-dependent stabilization of microtubules at the cell cortex. Phosphorylates MACF1, inhibiting its binding to microtubules which is critical for its role in bulge stem cell migration and skin wound repair. Probably regulates NF-kappa-B (NFKB1) at the transcriptional level and is required for the NF-kappa-B-mediated anti-apoptotic response to TNF-alpha (TNF/TNFA). Negatively regulates replication in pancreatic beta-cells, resulting in apoptosis, loss of beta-cells and diabetes. Through phosphorylation of the anti-apoptotic protein MCL1, may control cell apoptosis in response to growth factors deprivation. Phosphorylates MUC1 in breast cancer cells, decreasing the interaction of MUC1 with CTNNB1/beta-catenin. Is necessary for the establishment of neuronal polarity and axon outgrowth. Phosphorylates MARK2, leading to inhibition of its activity. Phosphorylates SIK1 at 'Thr-182', leading to sustainment of its activity. Phosphorylates ZC3HAV1 which enhances its antiviral activity. Phosphorylates SNAI1, leading to its ubiquitination and proteasomal degradation. Phosphorylates SFPQ at 'Thr-687' upon T-cell activation. Phosphorylates NR1D1 st 'Ser-55' and 'Ser-59' and stabilizes it by protecting it from proteasomal degradation. Regulates the circadian clock via phosphorylation of the major clock components including BMAL1, CLOCK and PER2. Phosphorylates CLOCK AT 'Ser-427' and targets it for proteasomal degradation. Phosphorylates BMAL1 at 'Ser-17' and 'Ser-21' and primes it for ubiquitination and proteasomal degradation. Phosphorylates FBXL2 at 'Thr-404' and primes it for ubiquitination by the SCF(FBXO3) complex and proteasomal degradation. Phosphorylates OGT at 'Ser-3' or 'Ser-4' which positively regulates its activity. Phosphorylates MYCN in neuroblastoma cells which may promote its degradation. Regulates the circadian rhythmicity of hippocampal long-term potentiation and BMAL1 and PER2 expression. Acts as a regulator of autophagy by mediating phosphorylation of KAT5/TIP60 under starvation conditions, activating KAT5/TIP60 acetyltransferase activity and promoting acetylation of key autophagy regulators, such as ULK1 and RUBCNL/Pacer. Negatively regulates extrinsic apoptotic signaling pathway via death domain receptors. Promotes the formation of an anti-apoptotic complex, made of DDX3X, BRIC2 and GSK3B, at death receptors, including TNFRSF10B. The anti-apoptotic function is most effective with weak apoptotic signals and can be overcome by stronger stimulation. Phosphorylates E2F1, promoting the interaction between E2F1 and USP11, stabilizing E2F1 and promoting its activity. Phosphorylates mTORC2 complex component RICTOR at 'Ser-1235' in response to endoplasmic stress, inhibiting mTORC2. Phosphorylates FXR1, promoting FXR1 ubiquitination by the SCF(FBXO4) complex and FXR1 degradation by the proteasome. Phosphorylates interleukin-22 receptor subunit IL22RA1, preventing its proteasomal degradation. The sequence is that of Glycogen synthase kinase-3 beta from Rattus norvegicus (Rat).